A 312-amino-acid polypeptide reads, in one-letter code: Pyridoxal kinase (312 aa).

M1 is modified (N-acetylmethionine). Pyridoxal is bound by residues S12 and T47. Position 47 (T47) interacts with pyridoxal 5'-phosphate. S59 carries the phosphoserine modification. D113 serves as a coordination point for ATP. Position 113 (D113) interacts with Na(+). Residue D118 coordinates Mg(2+). T148 is a Na(+) binding site. 150–153 (NQFE) contacts ATP. S164 carries the phosphoserine modification. T186 lines the Na(+) pocket. ATP is bound at residue 186 to 187 (TS). Position 213 is a phosphoserine (S213). ATP-binding positions include 226–228 (VDA) and T233. 234–235 (GD) is a binding site for pyridoxal 5'-phosphate. The active-site Proton acceptor is D235. S285 bears the Phosphoserine mark.

It belongs to the pyridoxine kinase family. In terms of assembly, homodimer. The cofactor is Mg(2+). Requires Zn(2+) as cofactor. Co(2+) is required as a cofactor. It depends on Mn(2+) as a cofactor. In terms of tissue distribution, ubiquitous. Highly expressed in testis. As to expression, in adult testis and spermatozoa.

It localises to the cytoplasm. The protein localises to the cytosol. The catalysed reaction is pyridoxal + ATP = pyridoxal 5'-phosphate + ADP + H(+). It carries out the reaction pyridoxamine + ATP = pyridoxamine 5'-phosphate + ADP + H(+). The enzyme catalyses pyridoxine + ATP = pyridoxine 5'-phosphate + ADP + H(+). It functions in the pathway cofactor metabolism; pyridoxal 5'-phosphate salvage; pyridoxal 5'-phosphate from pyridoxal: step 1/1. Its pathway is cofactor metabolism; pyridoxal 5'-phosphate salvage; pyridoxine 5'-phosphate from pyridoxine: step 1/1. It participates in cofactor metabolism; pyridoxal 5'-phosphate salvage; pyridoxamine 5'-phosphate from pyridoxamine: step 1/1. With respect to regulation, catalytic activity is inhibited competitively by 4-deoxypyridoxine, and is also inhibited by the benzodiazepine receptor ligands 1012S and ethyl-beta-carboline-3-carboxylate. Inhibited by ginkgotoxin, theophylline, lamotrigine, enprofylline, theobromine, and caffeine. Activity is increased in the presence of K(+)or Na(+). Its function is as follows. Catalyzes the phosphorylation of the dietary vitamin B6 vitamers pyridoxal (PL), pyridoxine (PN) and pyridoxamine (PM) to form pyridoxal 5'-phosphate (PLP), pyridoxine 5'-phosphate (PNP) and pyridoxamine 5'-phosphate (PMP), respectively. PLP is the active form of vitamin B6, and acts as a cofactor for over 140 different enzymatic reactions. The sequence is that of Pyridoxal kinase from Homo sapiens (Human).